The chain runs to 95 residues: Large ribosomal subunit protein bL21 (95 aa).

The protein belongs to the bacterial ribosomal protein bL21 family. As to quaternary structure, part of the 50S ribosomal subunit. Contacts protein L20.

Functionally, this protein binds to 23S rRNA in the presence of protein L20. This is Large ribosomal subunit protein bL21 from Rubrobacter xylanophilus (strain DSM 9941 / JCM 11954 / NBRC 16129 / PRD-1).